Reading from the N-terminus, the 154-residue chain is Fimbrial protein (154 aa).

The propeptide at 1–6 (MNAQKG) is leader sequence. F7 is subject to N-methylphenylalanine. The helical transmembrane segment at 7-29 (FTLIELMIVIAIIGILAAIALPA) threads the bilayer.

The protein belongs to the N-Me-Phe pilin family. As to quaternary structure, the pili are polar flexible filaments of about 5.4 nanometers diameter and 2.5 micrometers average length; they consist of only a single polypeptide chain arranged in a helical configuration of five subunits per turn in the assembled pilus.

Its subcellular location is the fimbrium. It localises to the membrane. This Moraxella nonliquefaciens protein is Fimbrial protein (tfpA).